Reading from the N-terminus, the 189-residue chain is Peptidyl-tRNA hydrolase (189 aa).

Tyr-14 contacts tRNA. The active-site Proton acceptor is His-19. 3 residues coordinate tRNA: Tyr-64, Asn-66, and Asn-112.

This sequence belongs to the PTH family. Monomer.

Its subcellular location is the cytoplasm. It carries out the reaction an N-acyl-L-alpha-aminoacyl-tRNA + H2O = an N-acyl-L-amino acid + a tRNA + H(+). Functionally, hydrolyzes ribosome-free peptidyl-tRNAs (with 1 or more amino acids incorporated), which drop off the ribosome during protein synthesis, or as a result of ribosome stalling. Catalyzes the release of premature peptidyl moieties from peptidyl-tRNA molecules trapped in stalled 50S ribosomal subunits, and thus maintains levels of free tRNAs and 50S ribosomes. This Clostridium botulinum (strain Okra / Type B1) protein is Peptidyl-tRNA hydrolase.